The sequence spans 107 residues: MPQLLTPPLSPLIIAVLNGNIEYTSELLQNGVDIDVRDKNGNSALHIAASKGYTKIATMLLLYGATIDAPNFELATPLHYAAANNYKDLTQYLLNMNANKSAVNKYN.

3 ANK repeats span residues 7–36, 40–69, and 73–102; these read PPLS…DIDV, NGNS…TIDA, and ELAT…NKSA.

The chain is Putative ankyrin repeat protein RP714 from Rickettsia prowazekii (strain Madrid E).